The primary structure comprises 70 residues: Small ribosomal subunit protein bS21 (70 aa).

Belongs to the bacterial ribosomal protein bS21 family.

The sequence is that of Small ribosomal subunit protein bS21 from Campylobacter fetus subsp. fetus (strain 82-40).